We begin with the raw amino-acid sequence, 795 residues long: Protein espinas (795 aa).

Positions 30-96 (GTGLTFPPHR…FVSPLQRRHC (67 aa)) are disordered. Residues 52–66 (ASMSSNVASTATSSN) show a composition bias toward low complexity. Residues 135 to 243 (LDFQRNSQSD…AVRLLSDERP (109 aa)) form the PET domain. 3 LIM zinc-binding domains span residues 242–306 (RPCK…ETQK), 307–367 (PRCS…MFAE), and 368–430 (YCDY…GEPP). 2 disordered regions span residues 427 to 487 (GEPP…GSAG) and 616 to 684 (NRNT…EMQI). Basic and acidic residues-rich tracts occupy residues 459-471 (RSGDRDRERESSR) and 637-649 (LDNRPLKEVRFHS). The segment covering 650–662 (VQDTMSRSKSYTD) has biased composition (polar residues). A compositionally biased stretch (basic residues) spans 666 to 675 (ARRRRRRRNQ).

The protein belongs to the prickle / espinas / testin family.

The chain is Protein espinas from Drosophila pseudoobscura pseudoobscura (Fruit fly).